The primary structure comprises 559 residues: MAAQGFLLIASFLLILLVLAKPLGSGLARLIAAVPLPGVAGIERILWRTLGITDHEMNWRQYLLALLTLNLLGLGILFCLLFWQEWLPLNPQRLPGLSGDLALNTAVSFVTNTNWQAYSGESTLSYFSQMAGLTVQNFLSAATGIAVVFALIRAFTRQNVHTLGNAWQDLVRITLWILFPVALIIALFFIQQGVPQNLSAYQPITTLEGAKQLLPMGPVASQEAIKMLGTNGGGFFNANSSHPFENPTALTNLAQMLAIFLIPAALCFAFGEAAGDRCQGRALLWAMSFIFVVCVAVVMWAEVQGNPHLLAAGADSSVNMEGKETRFGVLASSLFAVVTTAASCGAVNAMHDSFTALGGMVPMWLMQIGEVVFGGVGSGLYGMLLFVLLAVFIAGLMIGRTPEYLGKKIDVREMKMTALAILVTPMLVLLGSALAMMTDAGRSAMLNPGPHGFSEVLYAVSSAANNNGSAFAGLSANSPFWNCLLAFCMFVGRFGVIIPVMAIAGSLVSKKVQPASQGTLATHGALFIGLLIGTVLLVGALTFIPALALGPVAEHFSLP.

The next 13 membrane-spanning stretches (helical) occupy residues 5 to 25 (GFLLIASFLLILLVLAKPLGS), 27 to 47 (LARLIAAVPLPGVAGIERILW), 63 to 83 (LLALLTLNLLGLGILFCLLFW), 132 to 152 (GLTVQNFLSAATGIAVVFALI), 170 to 190 (LVRITLWILFPVALIIALFFI), 253 to 273 (LAQMLAIFLIPAALCFAFGEA), 283 to 303 (LLWAMSFIFVVCVAVVMWAEV), 327 to 347 (FGVLASSLFAVVTTAASCGAV), 356 to 376 (ALGGMVPMWLMQIGEVVFGGV), 379 to 399 (GLYGMLLFVLLAVFIAGLMIG), 416 to 436 (MTALAILVTPMLVLLGSALAM), 484 to 504 (LLAFCMFVGRFGVIIPVMAIA), and 524 to 544 (GALFIGLLIGTVLLVGALTFI).

Belongs to the KdpA family. The system is composed of three essential subunits: KdpA, KdpB and KdpC.

The protein resides in the cell inner membrane. In terms of biological role, part of the high-affinity ATP-driven potassium transport (or Kdp) system, which catalyzes the hydrolysis of ATP coupled with the electrogenic transport of potassium into the cytoplasm. This subunit binds the periplasmic potassium ions and delivers the ions to the membrane domain of KdpB through an intramembrane tunnel. The chain is Potassium-transporting ATPase potassium-binding subunit from Salmonella typhimurium (strain LT2 / SGSC1412 / ATCC 700720).